The sequence spans 512 residues: MDTTAVASKGSTNVGSSTDTLSTSASLHPSMNAGSVNEYSEQQRHGTNSFNGKPSVHDSVGSDASVSNGHNNHNESSLWTSGIPKALEEATKSKKPDSLVSTSTSGCASAHSVGYQNIDNLIPSPLPESASRSSSQSSHQRHSRDGRGELGSEHGERRSAMDGLRDRHIRKVRVSQLLDLQRRRIRPADHTTKDRYGIQDFNFLQTLGTGSFGRVHLVQSNHNRLYYAIKVLEKKKIVDMKQIEHTCDERYILSRVQHPFITILWGTFQDAKNLFMVMDFAEGGELFSLLRKCHRFPEKVAKFYAAEVILALDYLHHNQIVYRDLKPENLLLDRFGHLKIVDFGFAKRVSTSNCCTLCGTPDYLAPEIISLKPYNKAADWWSLGILIFEMLAGYPPFYSENPMKLYENILEGKVNYPSYFSPASIDLLSHLLQRDITCRYGNLKDGSMDIIMHPWFRDISWDKILTRKIEVPYVPPIQAGMGDSSQFDAYADVATDYGTSEDPEFTSIFKDF.

Positions 1–15 (MDTTAVASKGSTNVG) are enriched in polar residues. Disordered regions lie at residues 1–79 (MDTT…SSLW) and 118–166 (IDNL…GLRD). The span at 16-27 (SSTDTLSTSASL) shows a compositional bias: low complexity. Composition is skewed to polar residues over residues 32–52 (NAGS…SFNG) and 62–79 (SDAS…SSLW). Positions 143 to 166 (SRDGRGELGSEHGERRSAMDGLRD) are enriched in basic and acidic residues. The Protein kinase domain occupies 201–456 (FNFLQTLGTG…SMDIIMHPWF (256 aa)). ATP-binding positions include 207 to 215 (LGTGSFGRV) and Lys230. The Proton acceptor role is filled by Asp324. At Thr356 the chain carries Phosphothreonine. The 56-residue stretch at 457 to 512 (RDISWDKILTRKIEVPYVPPIQAGMGDSSQFDAYADVATDYGTSEDPEFTSIFKDF) folds into the AGC-kinase C-terminal domain.

This sequence belongs to the protein kinase superfamily. AGC Ser/Thr protein kinase family. cAMP subfamily.

It catalyses the reaction L-seryl-[protein] + ATP = O-phospho-L-seryl-[protein] + ADP + H(+). The catalysed reaction is L-threonyl-[protein] + ATP = O-phospho-L-threonyl-[protein] + ADP + H(+). Activated by cAMP. The sequence is that of cAMP-dependent protein kinase catalytic subunit (pka1) from Schizosaccharomyces pombe (strain 972 / ATCC 24843) (Fission yeast).